The following is a 128-amino-acid chain: Cytochrome c oxidase subunit 5B, mitochondrial (128 aa).

The N-terminal 30 residues, 1–30 (MASRLLRGVGALAAQALRRTARGAAVTRSM), are a transit peptide targeting the mitochondrion. 2 positions are modified to N6-acetyllysine: Lys-67 and Lys-85. Residues Cys-90, Cys-92, Cys-112, and Cys-115 each coordinate Zn(2+). Residue Lys-120 is modified to N6-acetyllysine.

The protein belongs to the cytochrome c oxidase subunit 5B family. In terms of assembly, component of the cytochrome c oxidase (complex IV, CIV), a multisubunit enzyme composed of 14 subunits. The complex is composed of a catalytic core of 3 subunits MT-CO1, MT-CO2 and MT-CO3, encoded in the mitochondrial DNA, and 11 supernumerary subunits COX4I, COX5A, COX5B, COX6A, COX6B, COX6C, COX7A, COX7B, COX7C, COX8 and NDUFA4, which are encoded in the nuclear genome. The complex exists as a monomer or a dimer and forms supercomplexes (SCs) in the inner mitochondrial membrane with NADH-ubiquinone oxidoreductase (complex I, CI) and ubiquinol-cytochrome c oxidoreductase (cytochrome b-c1 complex, complex III, CIII), resulting in different assemblies (supercomplex SCI(1)III(2)IV(1) and megacomplex MCI(2)III(2)IV(2)).

Its subcellular location is the mitochondrion inner membrane. It participates in energy metabolism; oxidative phosphorylation. Functionally, component of the cytochrome c oxidase, the last enzyme in the mitochondrial electron transport chain which drives oxidative phosphorylation. The respiratory chain contains 3 multisubunit complexes succinate dehydrogenase (complex II, CII), ubiquinol-cytochrome c oxidoreductase (cytochrome b-c1 complex, complex III, CIII) and cytochrome c oxidase (complex IV, CIV), that cooperate to transfer electrons derived from NADH and succinate to molecular oxygen, creating an electrochemical gradient over the inner membrane that drives transmembrane transport and the ATP synthase. Cytochrome c oxidase is the component of the respiratory chain that catalyzes the reduction of oxygen to water. Electrons originating from reduced cytochrome c in the intermembrane space (IMS) are transferred via the dinuclear copper A center (CU(A)) of subunit 2 and heme A of subunit 1 to the active site in subunit 1, a binuclear center (BNC) formed by heme A3 and copper B (CU(B)). The BNC reduces molecular oxygen to 2 water molecules using 4 electrons from cytochrome c in the IMS and 4 protons from the mitochondrial matrix. The protein is Cytochrome c oxidase subunit 5B, mitochondrial (Cox5b) of Mus musculus (Mouse).